The primary structure comprises 465 residues: Calcitonin gene-related peptide type 1 receptor (465 aa).

The N-terminal stretch at Met-1 to Ala-17 is a signal peptide. Topologically, residues Ser-18–Met-141 are extracellular. N-linked (GlcNAc...) asparagine glycans are attached at residues Asn-22, Asn-68, Asn-120, and Asn-125. Disulfide bonds link Cys-50-Cys-76, Cys-67-Cys-107, and Cys-90-Cys-129. Residues Asn-142–Phe-166 traverse the membrane as a helical segment. At Tyr-167–Thr-177 the chain is on the cytoplasmic side. Residues Leu-178–Val-200 traverse the membrane as a helical segment. Over Ala-201–Pro-211 the chain is Extracellular. Residues Thr-212 to His-240 traverse the membrane as a helical segment. At Thr-241–Leu-254 the chain is on the cytoplasmic side. A helical transmembrane segment spans residues Met-255 to Ala-275. Residues Arg-276–Ser-291 lie on the Extracellular side of the membrane. Asn-289 carries N-linked (GlcNAc...) asparagine glycosylation. The helical transmembrane segment at Leu-292 to Arg-316 threads the bilayer. Over Val-317–Ser-331 the chain is Cytoplasmic. A helical membrane pass occupies residues Leu-332 to Leu-353. Residues Leu-354 to Asp-368 are Extracellular-facing. Residues Tyr-369–Phe-389 form a helical membrane-spanning segment. The Cytoplasmic segment spans residues Asn-390–Thr-465.

Belongs to the G-protein coupled receptor 2 family.

Its subcellular location is the cell membrane. May function as G protein-coupled receptor for calcitonin-gene-related peptides and adrenomedullin. Specificity may be modulated by accessory proteins. May activate cAMP-dependent pathway. This is Calcitonin gene-related peptide type 1 receptor (calcrl) from Oncorhynchus gorbuscha (Pink salmon).